We begin with the raw amino-acid sequence, 1342 residues long: DNA-directed RNA polymerase subunit beta (1342 aa).

This sequence belongs to the RNA polymerase beta chain family. The RNAP catalytic core consists of 2 alpha, 1 beta, 1 beta' and 1 omega subunit. When a sigma factor is associated with the core the holoenzyme is formed, which can initiate transcription.

The catalysed reaction is RNA(n) + a ribonucleoside 5'-triphosphate = RNA(n+1) + diphosphate. In terms of biological role, DNA-dependent RNA polymerase catalyzes the transcription of DNA into RNA using the four ribonucleoside triphosphates as substrates. The chain is DNA-directed RNA polymerase subunit beta from Aliivibrio fischeri (strain ATCC 700601 / ES114) (Vibrio fischeri).